A 489-amino-acid polypeptide reads, in one-letter code: Probable cytochrome P450 CYP44 (489 aa).

The segment at 12–31 is disordered; sequence VEKCPYSPTSSPNTPPRTFS. Residues 16–29 are compositionally biased toward low complexity; that stretch reads PYSPTSSPNTPPRT. C438 contacts heme.

It belongs to the cytochrome P450 family. The cofactor is heme.

Cytochromes P450 are a group of heme-thiolate monooxygenases. They oxidize a variety of structurally unrelated compounds, including steroids, fatty acids, and xenobiotics. In Caenorhabditis elegans, this protein is Probable cytochrome P450 CYP44 (cyp-44A1).